The chain runs to 318 residues: NADH-quinone oxidoreductase subunit H 2 (318 aa).

9 consecutive transmembrane segments (helical) span residues 4-24 (LLIA…AGVF), 77-97 (LAPA…AFAP), 106-126 (VGVL…VLGA), 146-166 (LAYE…AGSF), 179-199 (LWFI…GLAA), 214-234 (LVAG…FLGE), 238-258 (ILLV…GPIL), 262-282 (VWFG…RAAL), and 293-313 (FAWK…AWIA).

The protein belongs to the complex I subunit 1 family. In terms of assembly, NDH-1 is composed of 14 different subunits. Subunits NuoA, H, J, K, L, M, N constitute the membrane sector of the complex.

It is found in the cell inner membrane. It carries out the reaction a quinone + NADH + 5 H(+)(in) = a quinol + NAD(+) + 4 H(+)(out). Functionally, NDH-1 shuttles electrons from NADH, via FMN and iron-sulfur (Fe-S) centers, to quinones in the respiratory chain. The immediate electron acceptor for the enzyme in this species is believed to be ubiquinone. Couples the redox reaction to proton translocation (for every two electrons transferred, four hydrogen ions are translocated across the cytoplasmic membrane), and thus conserves the redox energy in a proton gradient. This subunit may bind ubiquinone. The polypeptide is NADH-quinone oxidoreductase subunit H 2 (Cereibacter sphaeroides (strain ATCC 17029 / ATH 2.4.9) (Rhodobacter sphaeroides)).